The following is a 351-amino-acid chain: Cytosolic sulfotransferase 9 (351 aa).

Over residues 1–11 (MDEKDILRNLR) the composition is skewed to basic and acidic residues. A disordered region spans residues 1–24 (MDEKDILRNLREEEEEEEENQSEE). A compositionally biased stretch (acidic residues) spans 12 to 22 (EEEEEEEENQS). 80–85 (KSGTTW) is a 3'-phosphoadenylyl sulfate binding site. Histidine 152 acts as the Proton acceptor in catalysis. Residues arginine 174, serine 182, tyrosine 252, and 317–319 (RKG) each bind 3'-phosphoadenylyl sulfate.

This sequence belongs to the sulfotransferase 1 family. As to expression, expressed in roots and leaves.

Its subcellular location is the cytoplasm. Sulfotransferase that utilizes 3'-phospho-5'-adenylyl sulfate (PAPS) as sulfonate donor. No activity with brassinosteroids. The sequence is that of Cytosolic sulfotransferase 9 (STO9) from Arabidopsis thaliana (Mouse-ear cress).